A 708-amino-acid chain; its full sequence is G-box-binding factor (708 aa).

Disordered regions lie at residues 1–29 (MLST…GSDL) and 123–339 (QQAQ…QTIP). Composition is skewed to low complexity over residues 11–21 (SSSSSSSSSPS), 123–219 (QQAQ…QHHQ), and 227–316 (SQPQ…SPST). Over residues 324–333 (ETSNSEKKDS) the composition is skewed to basic and acidic residues. Repeat copies occupy residues 339-368 (PKCT…AFTP) and 481-510 (PPCP…PFTP). The segment at 511-604 (VGAGLSPSSS…PTYSPNPSLP (94 aa)) is disordered. Residues 516 to 590 (SPSSSPSSPK…SSISQSPLQL (75 aa)) are compositionally biased toward low complexity. Residues 591-600 (NYQTPTYSPN) show a composition bias toward polar residues.

It is found in the nucleus. CAMP-responsive transcriptional activator regulating late gene expression. Essential component of the developmental switch between early and late development. Binds to a number of CA/GT-rich gene regulatory elements. The protein is G-box-binding factor (gbfA) of Dictyostelium discoideum (Social amoeba).